The chain runs to 802 residues: Copper-exporting P-type ATPase (802 aa).

2 consecutive HMA domains span residues K5–A70 and E72–S138. Positions 16, 19, 83, and 86 each coordinate Cu(+). The next 6 helical transmembrane spans lie at L161–N181, W192–G212, M224–V244, L256–A276, Y411–V431, and P438–A458. Catalysis depends on D495, which acts as the 4-aspartylphosphate intermediate. 2 residues coordinate Mg(2+): D690 and D694. 2 helical membrane passes run L748–L767 and V771–L790.

This sequence belongs to the cation transport ATPase (P-type) (TC 3.A.3) family. Type IB subfamily.

It localises to the cell membrane. The enzyme catalyses Cu(+)(in) + ATP + H2O = Cu(+)(out) + ADP + phosphate + H(+). Involved in copper export. This is Copper-exporting P-type ATPase (copA) from Staphylococcus aureus (strain COL).